The primary structure comprises 479 residues: Preferentially expressed antigen in melanoma-like protein 7 (479 aa).

An LRR 1; degenerate repeat occupies 96–124 (MGRLKKVDFRDAQHHASLDMQDEREGRDY). Residues 179 to 203 (HLCCEKLEIGAVEVSKVRNVLKFLQ) form an LRR 2; degenerate repeat. Residues 204–230 (PELIKELKLNTVGNLSKLAKFVPFIRK) form an LRR 3; degenerate repeat. The LRR 4; degenerate repeat unit spans residues 231–265 (MRNLQKLMLVRTFGTRTFTQEEKQNISKIISLFCK). LRR repeat units lie at residues 266–291 (LSCL…LRCL), 292–323 (EAPL…SQLK), 324–347 (HLCL…LKRV), 348–375 (AANL…ALIK), and 376–400 (CTQL…FLHR).

Belongs to the PRAME family. As to quaternary structure, interacts with UHRF1. In terms of tissue distribution, seems to be specific to pluripotent tissues in the early embryo. Not detected in somatic tissues.

Promotes maintenance and self-renewal of pluripotent embryonic stem cells (ESCs), downstream of LIF/STAT3. Maintains the pluripotency state of ESCs by repressing DNA methylation through the regulation of UHRF1 stability. Mediates the proteasomal degradation of UHRF1. Is required for the establishment of the blastocyst. The chain is Preferentially expressed antigen in melanoma-like protein 7 from Mus musculus (Mouse).